The chain runs to 325 residues: tRNA N6-adenosine threonylcarbamoyltransferase (325 aa).

Fe cation-binding residues include H107, H111, and Y127. Substrate-binding positions include 127–131, D159, G172, E176, and N257; that span reads YVSGG. Residue D285 coordinates Fe cation.

The protein belongs to the KAE1 / TsaD family. Monomer. Component of the KEOPS complex that consists of Kae1, Bud32, Cgi121 and Pcc1; the whole complex dimerizes. The cofactor is Fe(2+).

The protein localises to the cytoplasm. It carries out the reaction L-threonylcarbamoyladenylate + adenosine(37) in tRNA = N(6)-L-threonylcarbamoyladenosine(37) in tRNA + AMP + H(+). Its function is as follows. Required for the formation of a threonylcarbamoyl group on adenosine at position 37 (t(6)A37) in tRNAs that read codons beginning with adenine. Is a component of the KEOPS complex that is probably involved in the transfer of the threonylcarbamoyl moiety of threonylcarbamoyl-AMP (TC-AMP) to the N6 group of A37. Kae1 likely plays a direct catalytic role in this reaction, but requires other protein(s) of the complex to fulfill this activity. The polypeptide is tRNA N6-adenosine threonylcarbamoyltransferase (Thermococcus gammatolerans (strain DSM 15229 / JCM 11827 / EJ3)).